Here is a 316-residue protein sequence, read N- to C-terminus: tRNA dimethylallyltransferase (316 aa).

17–24 (GPTASGKT) serves as a coordination point for ATP. Residue 19-24 (TASGKT) coordinates substrate. Interaction with substrate tRNA stretches follow at residues 42-45 (DSAL), 166-170 (QRLSR), and 247-252 (RCVGYR).

This sequence belongs to the IPP transferase family. Monomer. Requires Mg(2+) as cofactor.

It carries out the reaction adenosine(37) in tRNA + dimethylallyl diphosphate = N(6)-dimethylallyladenosine(37) in tRNA + diphosphate. In terms of biological role, catalyzes the transfer of a dimethylallyl group onto the adenine at position 37 in tRNAs that read codons beginning with uridine, leading to the formation of N6-(dimethylallyl)adenosine (i(6)A). This chain is tRNA dimethylallyltransferase, found in Salmonella paratyphi A (strain ATCC 9150 / SARB42).